A 458-amino-acid chain; its full sequence is GTPase Der (458 aa).

EngA-type G domains lie at 3–167 (PVVV…PETE) and 176–351 (IKLA…AQYT). GTP contacts are provided by residues 9–16 (GRPNVGKS), 56–60 (DTGGF), 119–122 (NKID), 182–189 (GRPNVGKS), 229–233 (DTAGL), and 294–297 (NKWD). The KH-like domain occupies 352–436 (FNIKTGELNN…PIRLFFREKP (85 aa)).

This sequence belongs to the TRAFAC class TrmE-Era-EngA-EngB-Septin-like GTPase superfamily. EngA (Der) GTPase family. Associates with the 50S ribosomal subunit.

Functionally, GTPase that plays an essential role in the late steps of ribosome biogenesis. The protein is GTPase Der of Desulfosudis oleivorans (strain DSM 6200 / JCM 39069 / Hxd3) (Desulfococcus oleovorans).